Reading from the N-terminus, the 124-residue chain is Small ribosomal subunit protein uS12 (124 aa).

The residue at position 89 (Asp-89) is a 3-methylthioaspartic acid.

Belongs to the universal ribosomal protein uS12 family. As to quaternary structure, part of the 30S ribosomal subunit. Contacts proteins S8 and S17. May interact with IF1 in the 30S initiation complex.

In terms of biological role, with S4 and S5 plays an important role in translational accuracy. Its function is as follows. Interacts with and stabilizes bases of the 16S rRNA that are involved in tRNA selection in the A site and with the mRNA backbone. Located at the interface of the 30S and 50S subunits, it traverses the body of the 30S subunit contacting proteins on the other side and probably holding the rRNA structure together. The combined cluster of proteins S8, S12 and S17 appears to hold together the shoulder and platform of the 30S subunit. The sequence is that of Small ribosomal subunit protein uS12 from Buchnera aphidicola subsp. Schizaphis graminum (strain Sg).